The chain runs to 838 residues: Axin-2 (838 aa).

The segment at 1–75 is disordered; that stretch reads MSSAVLVTLL…EGRASPDSPL (75 aa). Positions 21-30 match the Tankyrase-binding motif motif; the sequence is APRPPVPGEE. Over residues 42–55 the composition is skewed to polar residues; it reads KVQSTKPMPVSSNA. The segment covering 56 to 69 has biased composition (basic and acidic residues); the sequence is RRNEDGLGEPEGRA. An RGS domain is found at 81–200; the sequence is SLHSLLGDQD…LTSDIYLEYV (120 aa). Disordered stretches follow at residues 300–333, 398–435, 450–483, 568–682, and 712–744; these read SELS…KKQL, IRED…EEDP, PGCQ…LLPT, GSRG…AMPP, and VASQ…DHKE. Positions 303-318 are enriched in low complexity; the sequence is SSDALTDDSMSMTDSS. The segment at 327-413 is interaction with GSK3B; it reads MGSKKQLQRE…KEGSEQALSS (87 aa). The tract at residues 413 to 476 is interaction with beta-catenin; that stretch reads SRDGAPVQHP…PDHHHHHHQQ (64 aa). The segment covering 727-737 has biased composition (polar residues); the sequence is AGPTSFSNPSL. In terms of domain architecture, DIX spans 756 to 838; it reads ASELIVTYFF…RILGKVERID (83 aa).

Interacts with SMAD7 and RNF111. Interacts with ANKRD6. Interacts with glycogen synthase kinase-3 beta (GSK3B) and beta-catenin. The interaction between axin and beta-catenin occurs via the armadillo repeats contained in beta-catenin. Interacts with SIAH1. Interacts with SIAH2. Post-translationally, ADP-ribosylated by tankyrase TNKS and TNKS2. Poly-ADP-ribosylated protein is recognized by RNF146, followed by ubiquitination and subsequent activation of the Wnt signaling pathway. Ubiquitinated by RNF146 when poly-ADP-ribosylated, leading to its degradation and subsequent activation of the Wnt signaling pathway. Deubiquitinated by USP34, deubiquitinated downstream of beta-catenin stabilization step: deubiquitination is important Wnt signaling to positively regulate beta-catenin (CTNBB1)-mediated transcription. In terms of processing, probably phosphorylated by GSK3B and dephosphorylated by PP2A. As to expression, expressed in lung and thymus.

Its subcellular location is the cytoplasm. Inhibitor of the Wnt signaling pathway. Down-regulates beta-catenin. Probably facilitate the phosphorylation of beta-catenin and APC by GSK3B. In Rattus norvegicus (Rat), this protein is Axin-2 (Axin2).